The sequence spans 255 residues: tRNA (guanine-N(1)-)-methyltransferase (255 aa).

Residues G117 and L137–L142 contribute to the S-adenosyl-L-methionine site.

The protein belongs to the RNA methyltransferase TrmD family. As to quaternary structure, homodimer.

The protein localises to the cytoplasm. It catalyses the reaction guanosine(37) in tRNA + S-adenosyl-L-methionine = N(1)-methylguanosine(37) in tRNA + S-adenosyl-L-homocysteine + H(+). Specifically methylates guanosine-37 in various tRNAs. This chain is tRNA (guanine-N(1)-)-methyltransferase, found in Paraburkholderia phytofirmans (strain DSM 17436 / LMG 22146 / PsJN) (Burkholderia phytofirmans).